The sequence spans 151 residues: High mobility group B protein 14 (151 aa).

2 disordered regions span residues 1 to 62 (MTKR…QTKM) and 132 to 151 (TKRMESGAHDESETDSDYSE). The span at 7–20 (KSGPLSPSCSGGSS) shows a compositional bias: low complexity. A compositionally biased stretch (basic residues) spans 35-56 (RSTRLRLQPLRKPKTSPKKKPV). A DNA-binding region (HMG box) is located at residues 63 to 132 (PKKPATAFFF…EFHRAMTEYT (70 aa)). A compositionally biased stretch (basic and acidic residues) spans 132 to 142 (TKRMESGAHDE). The residue at position 150 (Ser150) is a Phosphoserine.

The protein belongs to the HMGB family.

The protein localises to the nucleus. This chain is High mobility group B protein 14 (HMGB14), found in Arabidopsis thaliana (Mouse-ear cress).